The primary structure comprises 76 residues: Small ribosomal subunit protein bS16 (76 aa).

It belongs to the bacterial ribosomal protein bS16 family.

This is Small ribosomal subunit protein bS16 from Helicobacter pylori (strain HPAG1).